The chain runs to 232 residues: Probable dihydroorotate dehydrogenase B (NAD(+)), electron transfer subunit (232 aa).

The FAD-binding FR-type domain occupies 1–86 (MYYTRITQIE…RGAFGSAFTP (86 aa)). [2Fe-2S] cluster is bound by residues Cys202, Cys207, Cys210, and Cys219.

It belongs to the PyrK family. Heterotetramer of 2 PyrK and 2 PyrD type B subunits. It depends on [2Fe-2S] cluster as a cofactor. FAD is required as a cofactor.

Its pathway is pyrimidine metabolism; UMP biosynthesis via de novo pathway; orotate from (S)-dihydroorotate (NAD(+) route): step 1/1. In terms of biological role, responsible for channeling the electrons from the oxidation of dihydroorotate from the FMN redox center in the PyrD type B subunit to the ultimate electron acceptor NAD(+). This chain is Probable dihydroorotate dehydrogenase B (NAD(+)), electron transfer subunit, found in Archaeoglobus fulgidus (strain ATCC 49558 / DSM 4304 / JCM 9628 / NBRC 100126 / VC-16).